Here is a 319-residue protein sequence, read N- to C-terminus: Acetyl-coenzyme A carboxylase carboxyl transferase subunit alpha (319 aa).

A CoA carboxyltransferase C-terminal domain is found at 35–296 (NIDEEVHRLR…KAQLLEDLAD (262 aa)).

Belongs to the AccA family. Acetyl-CoA carboxylase is a heterohexamer composed of biotin carboxyl carrier protein (AccB), biotin carboxylase (AccC) and two subunits each of ACCase subunit alpha (AccA) and ACCase subunit beta (AccD).

It localises to the cytoplasm. The catalysed reaction is N(6)-carboxybiotinyl-L-lysyl-[protein] + acetyl-CoA = N(6)-biotinyl-L-lysyl-[protein] + malonyl-CoA. It functions in the pathway lipid metabolism; malonyl-CoA biosynthesis; malonyl-CoA from acetyl-CoA: step 1/1. Functionally, component of the acetyl coenzyme A carboxylase (ACC) complex. First, biotin carboxylase catalyzes the carboxylation of biotin on its carrier protein (BCCP) and then the CO(2) group is transferred by the carboxyltransferase to acetyl-CoA to form malonyl-CoA. The chain is Acetyl-coenzyme A carboxylase carboxyl transferase subunit alpha from Salmonella paratyphi C (strain RKS4594).